A 591-amino-acid chain; its full sequence is V-type ATP synthase alpha chain (591 aa).

233 to 240 is an ATP binding site; that stretch reads GPFGAGKT.

The protein belongs to the ATPase alpha/beta chains family.

The catalysed reaction is ATP + H2O + 4 H(+)(in) = ADP + phosphate + 5 H(+)(out). Functionally, produces ATP from ADP in the presence of a proton gradient across the membrane. The V-type alpha chain is a catalytic subunit. The polypeptide is V-type ATP synthase alpha chain (Streptococcus pyogenes serotype M5 (strain Manfredo)).